A 407-amino-acid polypeptide reads, in one-letter code: Phosphopentomutase (407 aa).

Mn(2+)-binding residues include Asp-10, Asp-306, His-311, Asp-347, His-348, and His-359.

This sequence belongs to the phosphopentomutase family. Mn(2+) is required as a cofactor.

It is found in the cytoplasm. The enzyme catalyses 2-deoxy-alpha-D-ribose 1-phosphate = 2-deoxy-D-ribose 5-phosphate. It catalyses the reaction alpha-D-ribose 1-phosphate = D-ribose 5-phosphate. The protein operates within carbohydrate degradation; 2-deoxy-D-ribose 1-phosphate degradation; D-glyceraldehyde 3-phosphate and acetaldehyde from 2-deoxy-alpha-D-ribose 1-phosphate: step 1/2. Functionally, isomerase that catalyzes the conversion of deoxy-ribose 1-phosphate (dRib-1-P) and ribose 1-phosphate (Rib-1-P) to deoxy-ribose 5-phosphate (dRib-5-P) and ribose 5-phosphate (Rib-5-P), respectively. This Salmonella gallinarum (strain 287/91 / NCTC 13346) protein is Phosphopentomutase.